Consider the following 911-residue polypeptide: Pesticidal crystal protein Cry1Af (911 aa).

The protein belongs to the delta endotoxin family.

Its function is as follows. Promotes colloidosmotic lysis by binding to the midgut epithelial cells of both dipteran and lepidopteran larvae. This is Pesticidal crystal protein Cry1Af (cry1Af) from Bacillus thuringiensis.